We begin with the raw amino-acid sequence, 1284 residues long: Integrator complex subunit 6 (1284 aa).

Positions 3–134 (IILFLVDTSS…PSVIIVITDG (132 aa)) constitute a VWFA domain. Disordered regions lie at residues 653-824 (DVAP…GMSN), 864-895 (ETGETEAVPGGASLPGASSANEPSSIGASPAV), 1053-1086 (TSSGSSVGAGASNSNLNGNGSTESGGGVSSDDHA), and 1125-1180 (NNSS…PGQS). Residues 690–721 (SPGGGSGPGMPGMPGMGGGMSGLMLGAGGSGG) show a composition bias toward gly residues. Composition is skewed to low complexity over residues 752–781 (DSRSSSSGSESSTTGSAPGSPIPGATSSIS) and 803–824 (NSNSSFVSSTSEASASDSGMSN). A compositionally biased stretch (polar residues) spans 879–890 (GASSANEPSSIG). Composition is skewed to low complexity over residues 1053–1074 (TSSGSSVGAGASNSNLNGNGST) and 1125–1141 (NNSSAAGAASGSTLSNN). Over residues 1159–1171 (INSSCGSSPTHNN) the composition is skewed to polar residues.

This sequence belongs to the Integrator subunit 6 family. As to quaternary structure, belongs to the multiprotein complex Integrator, at least composed of IntS1, IntS2, IntS3, IntS4, omd/IntS5, IntS6, defl/IntS7, IntS8, IntS9, IntS10, IntS11, IntS12, asun/IntS13, IntS14 and IntS15. The core complex associates with protein phosphatase 2A subunits mts/PP2A and Pp2A-29B, to form the Integrator-PP2A (INTAC) complex.

Its subcellular location is the nucleus. Component of the integrator complex, a multiprotein complex that terminates RNA polymerase II (Pol II) transcription in the promoter-proximal region of genes. The integrator complex provides a quality checkpoint during transcription elongation by driving premature transcription termination of transcripts that are unfavorably configured for transcriptional elongation: the complex terminates transcription by (1) catalyzing dephosphorylation of the C-terminal domain (CTD) of Pol II subunit Polr2A/Rbp1 and Spt5, and (2) degrading the exiting nascent RNA transcript via endonuclease activity. The integrator complex is also involved in the 3'-end processing of the U7 snRNA, and also the spliceosomal snRNAs U1, U2, U4 and U5. Within the integrator complex, IntS6 acts as a substrate adapter for protein phosphatase 2A (PP2A). This chain is Integrator complex subunit 6, found in Drosophila melanogaster (Fruit fly).